The following is a 126-amino-acid chain: MAILGLGTDIVEIARIEAVISRSGERLARRVLSDNEWAIWESHQQPVRFLAKRFAVKEAAAKAFGTGIRNGLAFNQFEVFNDELGKPRLRLWGEALTLAEKLGVAHMHVTLADERHYACATVILES.

Positions 9 and 58 each coordinate Mg(2+).

Belongs to the P-Pant transferase superfamily. AcpS family. It depends on Mg(2+) as a cofactor.

The protein resides in the cytoplasm. It carries out the reaction apo-[ACP] + CoA = holo-[ACP] + adenosine 3',5'-bisphosphate + H(+). Functionally, transfers the 4'-phosphopantetheine moiety from coenzyme A to a Ser of acyl-carrier-protein. This Salmonella choleraesuis (strain SC-B67) protein is Holo-[acyl-carrier-protein] synthase.